Reading from the N-terminus, the 202-residue chain is Recombination protein RecR (202 aa).

The C4-type zinc-finger motif lies at 57–72; it reads CGVCRTFTEQPCCDIC. One can recognise a Toprim domain in the interval 81–176; that stretch reads GQICVVESPS…STTKIAHGVP (96 aa).

The protein belongs to the RecR family.

In terms of biological role, may play a role in DNA repair. It seems to be involved in an RecBC-independent recombinational process of DNA repair. It may act with RecF and RecO. This Hamiltonella defensa subsp. Acyrthosiphon pisum (strain 5AT) protein is Recombination protein RecR.